Here is a 135-residue protein sequence, read N- to C-terminus: Small ribosomal subunit protein bS18 (135 aa).

The tract at residues 1–65 (MARPDMGGPK…GDEGGGRRGF (65 aa)) is disordered. Positions 9-41 (PKMGGGFGGPRSGGFGGGGGGGGFGGGGFGGGR) are enriched in gly residues. Basic and acidic residues predominate over residues 42-61 (GGDRGDRGDRDDRGGDEGGG).

Belongs to the bacterial ribosomal protein bS18 family. As to quaternary structure, part of the 30S ribosomal subunit. Forms a tight heterodimer with protein bS6.

Binds as a heterodimer with protein bS6 to the central domain of the 16S rRNA, where it helps stabilize the platform of the 30S subunit. This Anaeromyxobacter dehalogenans (strain 2CP-C) protein is Small ribosomal subunit protein bS18.